The chain runs to 147 residues: D(1B) dopamine receptor (147 aa).

Residues 1–12 (SILISFPVQLNW) form a helical membrane-spanning segment. Over 13–55 (HRDQAGSWGGLDLTNNLANWTPWEEDVWEPDVRAENCDSSLNR) the chain is Extracellular. N-linked (GlcNAc...) asparagine glycosylation occurs at Asn54. The chain crosses the membrane as a helical span at residues 56–78 (TYAISSSLVSFYIPVAIMIVTYT). The Cytoplasmic portion of the chain corresponds to 79 to 128 (RIYRIAQVQIRRISSLERAAEHAQSCRSSAACAPDTSLRASIKKETKVLK). Residues 129–147 (TLSVIMGVFVCCWLPFFIL) form a helical membrane-spanning segment.

This sequence belongs to the G-protein coupled receptor 1 family.

Its subcellular location is the cell membrane. Its function is as follows. Dopamine receptor whose activity is mediated by G proteins which activate adenylyl cyclase. This chain is D(1B) dopamine receptor (DRD5), found in Macaca mulatta (Rhesus macaque).